Here is a 116-residue protein sequence, read N- to C-terminus: Large ribosomal subunit protein P2 (116 aa).

A disordered region spans residues Gly-60–Asp-116. A compositionally biased stretch (gly residues) spans Ser-67 to Ala-87. A compositionally biased stretch (basic and acidic residues) spans Ala-91–Glu-101.

This sequence belongs to the eukaryotic ribosomal protein P1/P2 family. P1 and P2 exist as dimers at the large ribosomal subunit. In terms of processing, phosphorylated.

Plays an important role in the elongation step of protein synthesis. This Branchiostoma floridae (Florida lancelet) protein is Large ribosomal subunit protein P2.